The following is a 40-amino-acid chain: Dolichyl-diphosphooligosaccharide--protein glycosyltransferase subunit 4 (40 aa).

Residues 1-4 lie on the Lumenal side of the membrane; it reads MITD. A helical transmembrane segment spans residues 5–25; that stretch reads VQLAIFSNVLGVFLFLLVVAY. Residues 26-40 lie on the Cytoplasmic side of the membrane; it reads HYINANTGKSIIKSK.

This sequence belongs to the OST4 family. In terms of assembly, component of the oligosaccharyltransferase (OST) complex.

It is found in the endoplasmic reticulum membrane. Its function is as follows. Subunit of the oligosaccharyl transferase (OST) complex that catalyzes the initial transfer of a defined glycan (Glc(3)Man(9)GlcNAc(2) in eukaryotes) from the lipid carrier dolichol-pyrophosphate to an asparagine residue within an Asn-X-Ser/Thr consensus motif in nascent polypeptide chains, the first step in protein N-glycosylation. N-glycosylation occurs cotranslationally and the complex associates with the Sec61 complex at the channel-forming translocon complex that mediates protein translocation across the endoplasmic reticulum (ER). All subunits are required for a maximal enzyme activity. The chain is Dolichyl-diphosphooligosaccharide--protein glycosyltransferase subunit 4 from Drosophila grimshawi (Hawaiian fruit fly).